Reading from the N-terminus, the 278-residue chain is Probable NADP-dependent mannitol dehydrogenase (278 aa).

I45, N117, and K152 together coordinate NADP(+). Active-site proton donor residues include S171 and Y186. The NADP(+) site is built by Y186, K190, and T220. The Lowers pKa of active site Tyr role is filled by K190.

The protein belongs to the short-chain dehydrogenases/reductases (SDR) family. Homotetramer.

The catalysed reaction is D-mannitol + NADP(+) = D-fructose + NADPH + H(+). Its function is as follows. Versatile oxidoreductase that catalyzes the oxidation and reduction of polar as well as non-polar substrates at a very broad pH range. Preferentially oxidizes secondary alcohols. Has highest activity for racemic 2-heptanol and racemic octanol. Is also an efficient reductase for selected substrates. Substrate selectivity was found for medium chain length ketones with the carbonyl function at position C-2. Has highest activities for ribulose and fructose. The enzyme is (R)-selective in the reduction direction and produces exclusively the (R)-enantiomer. The protein is Probable NADP-dependent mannitol dehydrogenase of Yarrowia lipolytica (strain CLIB 122 / E 150) (Yeast).